Reading from the N-terminus, the 365-residue chain is Ribosomal RNA large subunit methyltransferase F (365 aa).

Low complexity-rich tracts occupy residues 1-18 and 30-42; these read MPKP…SPAG and AKLK…AASK. The tract at residues 1–50 is disordered; it reads MPKPAIKTAAKPATSPAGKRAKPNTPQSVAKLKASTAKAASKPKAKLGEK.

This sequence belongs to the methyltransferase superfamily. METTL16/RlmF family.

The protein resides in the cytoplasm. It catalyses the reaction adenosine(1618) in 23S rRNA + S-adenosyl-L-methionine = N(6)-methyladenosine(1618) in 23S rRNA + S-adenosyl-L-homocysteine + H(+). Specifically methylates the adenine in position 1618 of 23S rRNA. In Shewanella oneidensis (strain ATCC 700550 / JCM 31522 / CIP 106686 / LMG 19005 / NCIMB 14063 / MR-1), this protein is Ribosomal RNA large subunit methyltransferase F.